The primary structure comprises 234 residues: 1-(5-phosphoribosyl)-5-[(5-phosphoribosylamino)methylideneamino] imidazole-4-carboxamide isomerase (234 aa).

D9 serves as the catalytic Proton acceptor. The active-site Proton donor is the D131.

It belongs to the HisA/HisF family.

It localises to the cytoplasm. The enzyme catalyses 1-(5-phospho-beta-D-ribosyl)-5-[(5-phospho-beta-D-ribosylamino)methylideneamino]imidazole-4-carboxamide = 5-[(5-phospho-1-deoxy-D-ribulos-1-ylimino)methylamino]-1-(5-phospho-beta-D-ribosyl)imidazole-4-carboxamide. The protein operates within amino-acid biosynthesis; L-histidine biosynthesis; L-histidine from 5-phospho-alpha-D-ribose 1-diphosphate: step 4/9. This Staphylococcus aureus (strain NCTC 8325 / PS 47) protein is 1-(5-phosphoribosyl)-5-[(5-phosphoribosylamino)methylideneamino] imidazole-4-carboxamide isomerase.